A 65-amino-acid chain; its full sequence is Toxin NaTx-22 (65 aa).

The 64-residue stretch at 1-64 folds into the LCN-type CS-alpha/beta domain; it reads KDGYPVIKTT…TYPIPGKTCK (64 aa). Disulfide bonds link Cys12/Cys63, Cys16/Cys39, Cys25/Cys44, and Cys29/Cys46.

It belongs to the long (4 C-C) scorpion toxin superfamily. Sodium channel inhibitor family. As to expression, expressed by the venom gland.

It localises to the secreted. Probable sodium channel inhibitor. This is Toxin NaTx-22 from Centruroides sculpturatus (Arizona bark scorpion).